The primary structure comprises 352 residues: Protein YpbB (352 aa).

In terms of assembly, interacts with RecS and SSB (ssbA); the 6 C-terminal residues of SSB are required for interaction with YpbB.

It is found in the cytoplasm. The protein resides in the nucleoid. This chain is Protein YpbB (ypbB), found in Bacillus subtilis (strain 168).